The sequence spans 328 residues: L-lactate dehydrogenase (328 aa).

Residues Val18, Glu39, Lys46, Tyr71, and 85 to 86 (GA) each bind NAD(+). Substrate contacts are provided by Gln88 and Arg94. Residues Ser107, 124-126 (AAN), and Ser149 each bind NAD(+). A substrate-binding site is contributed by 126–129 (NPVD). 154-157 (DSAR) contributes to the substrate binding site. Beta-D-fructose 1,6-bisphosphate contacts are provided by Arg159 and His174. His181 (proton acceptor) is an active-site residue. Phosphotyrosine is present on Tyr226. Thr235 is a binding site for substrate.

Belongs to the LDH/MDH superfamily. LDH family. Homotetramer.

It is found in the cytoplasm. The catalysed reaction is (S)-lactate + NAD(+) = pyruvate + NADH + H(+). The protein operates within fermentation; pyruvate fermentation to lactate; (S)-lactate from pyruvate: step 1/1. Its activity is regulated as follows. Allosterically activated by fructose 1,6-bisphosphate (FBP). Its function is as follows. Catalyzes the conversion of lactate to pyruvate. This is L-lactate dehydrogenase from Streptococcus thermophilus (strain CNRZ 1066).